Reading from the N-terminus, the 553-residue chain is ATP synthase F(1) complex subunit alpha, mitochondrial (553 aa).

A mitochondrion-targeting transit peptide spans 1-43; the sequence is MLSVRVAAAVARALPRRAGLVSKNALGSSFVAARNLHASNTRL. Residues Ser53 and Ser65 each carry the phosphoserine modification. Ser76 is subject to Phosphoserine; alternate. A glycan (O-linked (GlcNAc) serine; alternate) is linked at Ser76. Ser106 is modified (phosphoserine). Lys123, Lys126, and Lys132 each carry N6-acetyllysine. The residue at position 134 (Thr134) is a Phosphothreonine. Lys161 is modified (N6-acetyllysine; alternate). Residue Lys161 is modified to N6-succinyllysine; alternate. The residue at position 166 (Ser166) is a Phosphoserine. N6-acetyllysine; alternate is present on Lys167. The residue at position 167 (Lys167) is an N6-succinyllysine; alternate. Ser184 carries the phosphoserine modification. The residue at position 204 (Arg204) is an Omega-N-methylarginine. Residues Gln215, Gly217, Lys218, Thr219, and Ser220 each coordinate ATP. Thr219 serves as a coordination point for Mg(2+). N6-acetyllysine; alternate is present on residues Lys230 and Lys239. N6-succinyllysine; alternate occurs at positions 230 and 239. Lys240 is subject to N6-acetyllysine. An N6-acetyllysine; alternate mark is found at Lys261 and Lys305. N6-succinyllysine; alternate occurs at positions 261 and 305. Asp312 contacts Mg(2+). At Lys427 the chain carries N6-acetyllysine; alternate. Lys427 carries the N6-succinyllysine; alternate modification. Lys434 is modified (N6-acetyllysine). Gln473 and Gln475 together coordinate ATP. 4 positions are modified to N6-acetyllysine; alternate: Lys498, Lys506, Lys531, and Lys539. N6-succinyllysine; alternate occurs at positions 498, 506, 531, and 539. The residue at position 541 (Lys541) is an N6-acetyllysine.

This sequence belongs to the ATPase alpha/beta chains family. As to quaternary structure, homotrimer. Component of the ATP synthase complex composed at least of ATP5F1A/subunit alpha, ATP5F1B/subunit beta, ATP5MC1/subunit c (homooctomer), MT-ATP6/subunit a, MT-ATP8/subunit 8, ATP5ME/subunit e, ATP5MF/subunit f, ATP5MG/subunit g, ATP5MK/subunit k, ATP5MJ/subunit j, ATP5F1C/subunit gamma, ATP5F1D/subunit delta, ATP5F1E/subunit epsilon, ATP5PF/subunit F6, ATP5PB/subunit b, ATP5PD/subunit d, ATP5PO/subunit OSCP. ATP synthase complex consists of a soluble F(1) head domain (subunits alpha(3) and beta(3)) - the catalytic core - and a membrane F(0) domain - the membrane proton channel (subunits c, a, 8, e, f, g, k and j). These two domains are linked by a central stalk (subunits gamma, delta, and epsilon) rotating inside the F1 region and a stationary peripheral stalk (subunits F6, b, d, and OSCP). Interacts with ATPAF2. Interacts with HRG; the interaction occurs on the surface of T-cells and alters the cell morphology when associated with concanavalin (in vitro). Interacts with PLG (angiostatin peptide); the interaction inhibits most of the angiogenic properties of angiostatin. Interacts with BLOC1S1. Interacts with BCL2L1 isoform BCL-X(L); the interaction mediates the association of BCL2L1 isoform BCL-X(L) with the mitochondrial membrane F(1)F(0) ATP synthase and enhances neurons metabolic efficiency. Interacts with CLN5 and PPT1. Interacts with S100A1; this interaction increases F1-ATPase activity. Interacts with ABCB7; this interaction allows the regulation of cellular iron homeostasis and cellular reactive oxygen species (ROS) levels in cardiomyocytes. In terms of processing, acetylated on lysine residues. BLOC1S1 is required for acetylation. In terms of tissue distribution, expressed in heart (at protein level).

The protein resides in the mitochondrion. It is found in the mitochondrion inner membrane. It localises to the cell membrane. In terms of biological role, subunit alpha, of the mitochondrial membrane ATP synthase complex (F(1)F(0) ATP synthase or Complex V) that produces ATP from ADP in the presence of a proton gradient across the membrane which is generated by electron transport complexes of the respiratory chain. ATP synthase complex consist of a soluble F(1) head domain - the catalytic core - and a membrane F(1) domain - the membrane proton channel. These two domains are linked by a central stalk rotating inside the F(1) region and a stationary peripheral stalk. During catalysis, ATP synthesis in the catalytic domain of F(1) is coupled via a rotary mechanism of the central stalk subunits to proton translocation. In vivo, can only synthesize ATP although its ATP hydrolase activity can be activated artificially in vitro. With the catalytic subunit beta (ATP5F1B), forms the catalytic core in the F(1) domain. Subunit alpha does not bear the catalytic high-affinity ATP-binding sites. The chain is ATP synthase F(1) complex subunit alpha, mitochondrial from Sus scrofa (Pig).